The primary structure comprises 542 residues: Exopolysaccharide phosphotransferase CpsY (542 aa).

The segment at 522–542 is disordered; the sequence is SPTVSAPLEDGQTANPAQTAR. Polar residues predominate over residues 533 to 542; that stretch reads QTANPAQTAR.

This sequence belongs to the stealth family.

The sequence is that of Exopolysaccharide phosphotransferase CpsY (cpsY) from Mycobacterium leprae (strain TN).